The following is a 328-amino-acid chain: L-asparaginase (328 aa).

The Asparaginase/glutaminase domain maps to 1–320 (MKLLVLGTGG…EEIRKIMERN (320 aa)). Thr11 serves as the catalytic Nucleophile; O-isoaspartyl threonine intermediate. Positions 11, 53, 54, 85, and 86 each coordinate L-aspartate. Active-site charge relay system residues include Thr85, Asp86, Lys156, and Tyr274.

Belongs to the asparaginase 1 family. In terms of assembly, homodimer.

It carries out the reaction L-asparagine + H2O = L-aspartate + NH4(+). Its activity is regulated as follows. Chohan et al. found that divalent metal ions and EDTA do not have any significant effect on enzyme activity, indicating that activity is independent of metal ions. In another study, Hong et al. showed that activity is enhanced by Mg(2+), significantly inhibited by Co(2+) and Ni(2+), and moderately inhibited by Ca(2+), Cu(2+) and EDTA. Unfolding studies suggest that urea cannot induce complete unfolding and inactivation of the enzyme even at a concentration 8 M. However, in the presence of 4 M guanidine hydrochloride, the enzyme structure is unfolded with complete loss of enzyme activity. Functionally, catalyzes the hydrolysis of L-asparagine into L-aspartate and ammonia. Also displays D-asparaginase activity, which is about 50% of the L-asparaginase activity. Does not exhibit glutaminase activity. The polypeptide is L-asparaginase (Thermococcus kodakarensis (strain ATCC BAA-918 / JCM 12380 / KOD1) (Pyrococcus kodakaraensis (strain KOD1))).